Reading from the N-terminus, the 98-residue chain is Flagellar hook-basal body complex protein FliE (98 aa).

A disordered region spans residues 22-56 (KTDNATGAGNTFTQMLDSMSDTQSNAQTSVSNLLT). The segment covering 23–56 (TDNATGAGNTFTQMLDSMSDTQSNAQTSVSNLLT) has biased composition (polar residues).

This sequence belongs to the FliE family.

The protein localises to the bacterial flagellum basal body. In Listeria innocua serovar 6a (strain ATCC BAA-680 / CLIP 11262), this protein is Flagellar hook-basal body complex protein FliE.